A 181-amino-acid polypeptide reads, in one-letter code: NADH-quinone oxidoreductase subunit I 2 (181 aa).

4Fe-4S ferredoxin-type domains follow at residues leucine 44 to alanine 74 and arginine 90 to aspartate 119. Positions 54, 57, 60, 64, 99, 102, 105, and 109 each coordinate [4Fe-4S] cluster.

Belongs to the complex I 23 kDa subunit family. In terms of assembly, NDH-1 is composed of 14 different subunits. Subunits NuoA, H, J, K, L, M, N constitute the membrane sector of the complex. The cofactor is [4Fe-4S] cluster.

Its subcellular location is the cell membrane. It catalyses the reaction a quinone + NADH + 5 H(+)(in) = a quinol + NAD(+) + 4 H(+)(out). In terms of biological role, NDH-1 shuttles electrons from NADH, via FMN and iron-sulfur (Fe-S) centers, to quinones in the respiratory chain. The immediate electron acceptor for the enzyme in this species is believed to be menaquinone. Couples the redox reaction to proton translocation (for every two electrons transferred, four hydrogen ions are translocated across the cytoplasmic membrane), and thus conserves the redox energy in a proton gradient. The protein is NADH-quinone oxidoreductase subunit I 2 of Mycolicibacterium paratuberculosis (strain ATCC BAA-968 / K-10) (Mycobacterium paratuberculosis).